A 121-amino-acid chain; its full sequence is Small ribosomal subunit protein uS13 (121 aa).

The disordered stretch occupies residues 93–121 (RGLPMRGQRTRTNARTRKGPRKGAAALKK).

Belongs to the universal ribosomal protein uS13 family. Part of the 30S ribosomal subunit. Forms a loose heterodimer with protein S19. Forms two bridges to the 50S subunit in the 70S ribosome.

Functionally, located at the top of the head of the 30S subunit, it contacts several helices of the 16S rRNA. In the 70S ribosome it contacts the 23S rRNA (bridge B1a) and protein L5 of the 50S subunit (bridge B1b), connecting the 2 subunits; these bridges are implicated in subunit movement. Contacts the tRNAs in the A and P-sites. The polypeptide is Small ribosomal subunit protein uS13 (Acidovorax ebreus (strain TPSY) (Diaphorobacter sp. (strain TPSY))).